A 466-amino-acid polypeptide reads, in one-letter code: Soluble pyridine nucleotide transhydrogenase (466 aa).

36-45 (ERYHNVGGGC) contributes to the FAD binding site.

It belongs to the class-I pyridine nucleotide-disulfide oxidoreductase family. The cofactor is FAD.

It is found in the cytoplasm. It catalyses the reaction NAD(+) + NADPH = NADH + NADP(+). In terms of biological role, conversion of NADPH, generated by peripheral catabolic pathways, to NADH, which can enter the respiratory chain for energy generation. The sequence is that of Soluble pyridine nucleotide transhydrogenase from Salmonella paratyphi C (strain RKS4594).